The following is a 290-amino-acid chain: Ribosomal RNA small subunit methyltransferase A (290 aa).

S-adenosyl-L-methionine contacts are provided by Asn-27, Leu-29, Gly-54, Glu-75, Asp-100, and Asn-125.

This sequence belongs to the class I-like SAM-binding methyltransferase superfamily. rRNA adenine N(6)-methyltransferase family. RsmA subfamily.

It localises to the cytoplasm. The enzyme catalyses adenosine(1518)/adenosine(1519) in 16S rRNA + 4 S-adenosyl-L-methionine = N(6)-dimethyladenosine(1518)/N(6)-dimethyladenosine(1519) in 16S rRNA + 4 S-adenosyl-L-homocysteine + 4 H(+). Specifically dimethylates two adjacent adenosines (A1518 and A1519) in the loop of a conserved hairpin near the 3'-end of 16S rRNA in the 30S particle. May play a critical role in biogenesis of 30S subunits. The chain is Ribosomal RNA small subunit methyltransferase A from Streptococcus pneumoniae (strain 70585).